A 308-amino-acid chain; its full sequence is Ribosomal RNA small subunit methyltransferase H (308 aa).

S-adenosyl-L-methionine-binding positions include 36 to 38 (GGH), D55, F86, D103, and Q110.

This sequence belongs to the methyltransferase superfamily. RsmH family.

It is found in the cytoplasm. The catalysed reaction is cytidine(1402) in 16S rRNA + S-adenosyl-L-methionine = N(4)-methylcytidine(1402) in 16S rRNA + S-adenosyl-L-homocysteine + H(+). Its function is as follows. Specifically methylates the N4 position of cytidine in position 1402 (C1402) of 16S rRNA. The sequence is that of Ribosomal RNA small subunit methyltransferase H from Helicobacter pylori (strain HPAG1).